Here is a 93-residue protein sequence, read N- to C-terminus: Pyrimidine/purine nucleoside phosphorylase (93 aa).

It belongs to the nucleoside phosphorylase PpnP family.

It catalyses the reaction a purine D-ribonucleoside + phosphate = a purine nucleobase + alpha-D-ribose 1-phosphate. The catalysed reaction is adenosine + phosphate = alpha-D-ribose 1-phosphate + adenine. The enzyme catalyses cytidine + phosphate = cytosine + alpha-D-ribose 1-phosphate. It carries out the reaction guanosine + phosphate = alpha-D-ribose 1-phosphate + guanine. It catalyses the reaction inosine + phosphate = alpha-D-ribose 1-phosphate + hypoxanthine. The catalysed reaction is thymidine + phosphate = 2-deoxy-alpha-D-ribose 1-phosphate + thymine. The enzyme catalyses uridine + phosphate = alpha-D-ribose 1-phosphate + uracil. It carries out the reaction xanthosine + phosphate = alpha-D-ribose 1-phosphate + xanthine. In terms of biological role, catalyzes the phosphorolysis of diverse nucleosides, yielding D-ribose 1-phosphate and the respective free bases. Can use uridine, adenosine, guanosine, cytidine, thymidine, inosine and xanthosine as substrates. Also catalyzes the reverse reactions. This chain is Pyrimidine/purine nucleoside phosphorylase, found in Vibrio vulnificus (strain CMCP6).